We begin with the raw amino-acid sequence, 213 residues long: Ras-related protein Rab-39B (213 aa).

Residues serine 17, glycine 20, lysine 21, serine 22, cysteine 23, serine 37, and threonine 40 each coordinate GTP. Serine 22 serves as a coordination point for Mg(2+). The segment at 35 to 43 (QVSDPTVGV) is switch-I. Mg(2+)-binding residues include threonine 40 and aspartate 64. GTP is bound by residues glycine 67, histidine 123, lysine 124, aspartate 126, alanine 154, and arginine 155. A switch-II region spans residues 67–83 (GQERFRSITRAYYRNSV). Phosphoserine is present on serine 201. S-geranylgeranyl cysteine attachment occurs at residues cysteine 211 and cysteine 213. The residue at position 213 (cysteine 213) is a Cysteine methyl ester.

This sequence belongs to the small GTPase superfamily. Rab family. In terms of assembly, interacts (GDP-bound) with C9orf72; C9orf72 in complex with SMCR8 acts as a GEF for RAB39B. Interacts (in GTP-bound form) with PICK1 (via PDZ domain); a PICK1 homodimer may allow simultaneous association of RAB39B and GRIA2 to PICK1 which is involved in GRIA2 trafficking. Interacts with isoform c of RASSF1; the interaction is strong. Interacts with isoform a of RASSF1; the interaction is weak. Interacts with the DLG4/PSD-95. Interacts (GTP-bound) with HOPS complex components VPS39 and VPS41. Mg(2+) serves as cofactor. In terms of tissue distribution, specifically expressed in neuron and neuronal precursors in the brain. Expression is high in all regions of the brain with highest levels observed in the hippocampus.

The protein localises to the cell membrane. It localises to the cytoplasmic vesicle membrane. It is found in the golgi apparatus. The protein resides in the cytoplasmic vesicle. Its subcellular location is the autophagosome membrane. The protein localises to the autolysosome membrane. It carries out the reaction GTP + H2O = GDP + phosphate + H(+). Its activity is regulated as follows. Regulated by guanine nucleotide exchange factors (GEFs) including C9orf72-SMCR8 complex, which promote the exchange of bound GDP for free GTP. Regulated by GTPase activating proteins (GAPs) which increase the GTP hydrolysis activity. Inhibited by GDP dissociation inhibitors (GDIs). In terms of biological role, the small GTPases Rab are key regulators of intracellular membrane trafficking, from the formation of transport vesicles to their fusion with membranes. Rabs cycle between an inactive GDP-bound form and an active GTP-bound form that is able to recruit to membranes different sets of downstream effectors directly responsible for vesicle formation, movement, tethering and fusion. RAB39B is involved in autophagy and may function in autophagosome formation. Binds downstream effector PICK1 to ensure selectively GRIA2 exit from the endoplasmic reticulum to the Golgi and to regulate AMPAR composition at the post-synapses and thus synaptic transmission. May regulate the homeostasis of SNCA/alpha-synuclein. This Mus musculus (Mouse) protein is Ras-related protein Rab-39B.